Here is a 131-residue protein sequence, read N- to C-terminus: Profilin-1 (131 aa).

The protein belongs to the profilin family. In terms of assembly, occurs in many kinds of cells as a complex with monomeric actin in a 1:1 ratio.

The protein localises to the cytoplasm. It is found in the cytoskeleton. Binds to actin and affects the structure of the cytoskeleton. At high concentrations, profilin prevents the polymerization of actin, whereas it enhances it at low concentrations. By binding to PIP2, it inhibits the formation of IP3 and DG. The polypeptide is Profilin-1 (PRO1) (Hordeum vulgare (Barley)).